We begin with the raw amino-acid sequence, 232 residues long: Noggin (232 aa).

The first 27 residues, 1 to 27 (MERCPSLGVTLYALVVVLGLRAAPAGG), serve as a signal peptide directing secretion. Residue Asn62 is glycosylated (N-linked (GlcNAc...) asparagine). The tract at residues 77–99 (GFMATSPPEDRPGGGGGPAGGAE) is disordered. 4 cysteine pairs are disulfide-bonded: Cys155–Cys192, Cys178–Cys228, Cys184–Cys230, and Cys207–Cys215.

Belongs to the noggin family. As to quaternary structure, homodimer. Interacts with GDF5; inhibits chondrocyte differentiation. In terms of tissue distribution, expressed in condensing cartilage and immature chondrocytes.

The protein localises to the secreted. Essential for cartilage morphogenesis and joint formation. Inhibitor of bone morphogenetic proteins (BMP) signaling which is required for growth and patterning of the neural tube and somite. Inhibits chondrocyte differentiation through its interaction with GDF5 and, probably, GDF6. The chain is Noggin (Nog) from Mus musculus (Mouse).